The sequence spans 206 residues: Small ribosomal subunit protein uS4 (206 aa).

The 61-residue stretch at 96–156 folds into the S4 RNA-binding domain; that stretch reads GRLDNVVYRM…EKAKNQLRVK (61 aa).

This sequence belongs to the universal ribosomal protein uS4 family. As to quaternary structure, part of the 30S ribosomal subunit. Contacts protein S5. The interaction surface between S4 and S5 is involved in control of translational fidelity.

Functionally, one of the primary rRNA binding proteins, it binds directly to 16S rRNA where it nucleates assembly of the body of the 30S subunit. Its function is as follows. With S5 and S12 plays an important role in translational accuracy. The chain is Small ribosomal subunit protein uS4 from Marinobacter nauticus (strain ATCC 700491 / DSM 11845 / VT8) (Marinobacter aquaeolei).